Reading from the N-terminus, the 742-residue chain is Glycine--tRNA ligase (742 aa).

The region spanning 73–129 (KLAPLRAAVKEYGDLIRDLKAKGAPKIDIDKAVVELKARKRLLEDTEIALAPKEASF) is the WHEP-TRS domain. Residue Glu-309 coordinates glycine. Residues 341–343 (RNE) and 352–353 (RV) each bind ATP. Position 360 (Glu-360) interacts with glycine. 467–468 (EC) contributes to the ATP binding site. Position 586-588 (586-588 (EPS)) interacts with glycine. Residue Arg-593 coordinates ATP.

Belongs to the class-II aminoacyl-tRNA synthetase family. In terms of assembly, homodimer.

The protein localises to the cytoplasm. Its subcellular location is the cell projection. It is found in the axon. The protein resides in the secreted. It localises to the extracellular exosome. It catalyses the reaction tRNA(Gly) + glycine + ATP = glycyl-tRNA(Gly) + AMP + diphosphate. The enzyme catalyses 2 ATP + H(+) = P(1),P(4)-bis(5'-adenosyl) tetraphosphate + diphosphate. Functionally, catalyzes the ATP-dependent ligation of glycine to the 3'-end of its cognate tRNA, via the formation of an aminoacyl-adenylate intermediate (Gly-AMP). Also produces diadenosine tetraphosphate (Ap4A), a universal pleiotropic signaling molecule needed for cell regulation pathways, by direct condensation of 2 ATPs. Thereby, may play a special role in Ap4A homeostasis. This chain is Glycine--tRNA ligase, found in Caenorhabditis elegans.